We begin with the raw amino-acid sequence, 417 residues long: GTP-binding protein YPT11 (417 aa).

Residues 1-34 (MSQRKRYSLNVVTSPSIPSPTPSAPIRTNESNWE) are disordered. Residues 97-104 (GDANVGKT), 228-232 (DTAGQ), and 292-295 (NKID) contribute to the GTP site. S-geranylgeranyl cysteine attachment occurs at residues Cys415 and Cys416.

The protein belongs to the small GTPase superfamily. Rab family. Interacts with MYO2 (via C-terminal tail domain). Interacts with YIF1, YIP3, YIP4 and YIP5.

The protein resides in the endoplasmic reticulum membrane. Its subcellular location is the bud tip. It localises to the bud neck. Its function is as follows. Involved in the positive control of both endoplasmic reticulum (ER) and mitochondrion inheritance during cell divison. Required for the MYO2-dependent retention of newly inherited mitochondria at the bud tip in developing daughter cells. The polypeptide is GTP-binding protein YPT11 (YPT11) (Saccharomyces cerevisiae (strain YJM789) (Baker's yeast)).